We begin with the raw amino-acid sequence, 35 residues long: MQVNDLGFIATILFVLVPTVFLLILYIQTRKETEG.

Residues 7–27 (GFIATILFVLVPTVFLLILYI) traverse the membrane as a helical segment.

The protein belongs to the PsbM family. In terms of assembly, PSII is composed of 1 copy each of membrane proteins PsbA, PsbB, PsbC, PsbD, PsbE, PsbF, PsbH, PsbI, PsbJ, PsbK, PsbL, PsbM, PsbT, PsbX, PsbY, PsbZ, Psb30/Ycf12, peripheral proteins PsbO, CyanoQ (PsbQ), PsbU, PsbV and a large number of cofactors. It forms dimeric complexes.

It localises to the cellular thylakoid membrane. One of the components of the core complex of photosystem II (PSII). PSII is a light-driven water:plastoquinone oxidoreductase that uses light energy to abstract electrons from H(2)O, generating O(2) and a proton gradient subsequently used for ATP formation. It consists of a core antenna complex that captures photons, and an electron transfer chain that converts photonic excitation into a charge separation. This subunit is found at the monomer-monomer interface. This chain is Photosystem II reaction center protein M, found in Gloeothece citriformis (strain PCC 7424) (Cyanothece sp. (strain PCC 7424)).